The following is a 917-amino-acid chain: Protein translocase subunit SecA (917 aa).

ATP contacts are provided by residues Gln87, 105-109 (GEGKT), and Asp513. Positions 834–917 (EEQMNEMEKR…YKSCHGKLTG (84 aa)) are disordered. Basic and acidic residues predominate over residues 839 to 852 (EMEKRRQEEAERQR). Positions 862–876 (APSQLAAPATPATPE) are enriched in low complexity. Zn(2+)-binding residues include Cys900, Cys902, Cys911, and His912.

It belongs to the SecA family. In terms of assembly, monomer and homodimer. Part of the essential Sec protein translocation apparatus which comprises SecA, SecYEG and auxiliary proteins SecDF-YajC and YidC. Zn(2+) is required as a cofactor.

It localises to the cell inner membrane. The protein localises to the cytoplasm. It carries out the reaction ATP + H2O + cellular proteinSide 1 = ADP + phosphate + cellular proteinSide 2.. In terms of biological role, part of the Sec protein translocase complex. Interacts with the SecYEG preprotein conducting channel. Has a central role in coupling the hydrolysis of ATP to the transfer of proteins into and across the cell membrane, serving both as a receptor for the preprotein-SecB complex and as an ATP-driven molecular motor driving the stepwise translocation of polypeptide chains across the membrane. The protein is Protein translocase subunit SecA of Saccharophagus degradans (strain 2-40 / ATCC 43961 / DSM 17024).